Reading from the N-terminus, the 105-residue chain is Met repressor (105 aa).

Belongs to the MetJ family. Homodimer.

Its subcellular location is the cytoplasm. Functionally, this regulatory protein, when combined with SAM (S-adenosylmethionine) represses the expression of the methionine regulon and of enzymes involved in SAM synthesis. This is Met repressor from Salmonella dublin (strain CT_02021853).